The sequence spans 190 residues: Ribosome maturation factor RimM (190 aa).

A PRC barrel domain is found at 114–190 (DDEYYWVDLI…CITVDWQPDY (77 aa)).

Belongs to the RimM family. In terms of assembly, binds ribosomal protein uS19.

The protein resides in the cytoplasm. An accessory protein needed during the final step in the assembly of 30S ribosomal subunit, possibly for assembly of the head region. Essential for efficient processing of 16S rRNA. May be needed both before and after RbfA during the maturation of 16S rRNA. It has affinity for free ribosomal 30S subunits but not for 70S ribosomes. In Acidovorax sp. (strain JS42), this protein is Ribosome maturation factor RimM.